We begin with the raw amino-acid sequence, 248 residues long: PF03932 family protein CutC (248 aa).

This sequence belongs to the CutC family. Homodimer.

The protein localises to the cytoplasm. In Salmonella heidelberg (strain SL476), this protein is PF03932 family protein CutC.